Consider the following 506-residue polypeptide: Maturase K (506 aa).

Belongs to the intron maturase 2 family. MatK subfamily.

It localises to the plastid. Its subcellular location is the chloroplast. Its function is as follows. Usually encoded in the trnK tRNA gene intron. Probably assists in splicing its own and other chloroplast group II introns. The polypeptide is Maturase K (Trifolium hirtum (Rose clover)).